The primary structure comprises 362 residues: Heme A synthase (362 aa).

A run of 5 helical transmembrane segments spans residues 15–35 (VRIWLTLVAMLIAVMVLVGGA), 104–124 (VIGIAYLLPLLWFLWRGAIAP), 129–149 (ALWAIFALGALQGAVGWWMVA), 161–181 (VRLAIHLTLALVIYAAIVWTL), and 200–220 (AIALLALTLVQLFLGALVAGL). Heme is bound at residue His264. 3 helical membrane-spanning segments follow: residues 266–285 (MMAYALWALAAWHAIDALRA), 293–313 (GALWLFAALSLQAVLGILTLL), and 316–336 (VPIGLALAHQAVGIVVLTLAV). His324 contributes to the heme binding site.

This sequence belongs to the COX15/CtaA family. Type 2 subfamily. Interacts with CtaB. The cofactor is heme b.

The protein resides in the cell membrane. It carries out the reaction Fe(II)-heme o + 2 A + H2O = Fe(II)-heme a + 2 AH2. It participates in porphyrin-containing compound metabolism; heme A biosynthesis; heme A from heme O: step 1/1. In terms of biological role, catalyzes the conversion of heme O to heme A by two successive hydroxylations of the methyl group at C8. The first hydroxylation forms heme I, the second hydroxylation results in an unstable dihydroxymethyl group, which spontaneously dehydrates, resulting in the formyl group of heme A. In Rhodopseudomonas palustris (strain BisB5), this protein is Heme A synthase.